The primary structure comprises 253 residues: Probable transcriptional regulatory protein Mmar10_2433 (253 aa).

The protein belongs to the TACO1 family.

The protein resides in the cytoplasm. The sequence is that of Probable transcriptional regulatory protein Mmar10_2433 from Maricaulis maris (strain MCS10) (Caulobacter maris).